We begin with the raw amino-acid sequence, 111 residues long: T cell receptor alpha variable 18 (111 aa).

Positions 1–20 (MLSASCSGLVILLIFRRTSG) are cleaved as a signal peptide. The 91-residue stretch at 21-111 (DSVTQTEGPV…DSAVYYCALR (91 aa)) folds into the Ig-like domain. The N-linked (GlcNAc...) asparagine glycan is linked to asparagine 41. Cysteine 42 and cysteine 108 are oxidised to a cystine.

As to quaternary structure, alpha-beta TR is a heterodimer composed of an alpha and beta chain; disulfide-linked. The alpha-beta TR is associated with the transmembrane signaling CD3 coreceptor proteins to form the TR-CD3 (TcR or TCR). The assembly of alpha-beta TR heterodimers with CD3 occurs in the endoplasmic reticulum where a single alpha-beta TR heterodimer associates with one CD3D-CD3E heterodimer, one CD3G-CD3E heterodimer and one CD247 homodimer forming a stable octameric structure. CD3D-CD3E and CD3G-CD3E heterodimers preferentially associate with TR alpha and TR beta chains, respectively. The association of the CD247 homodimer is the last step of TcR assembly in the endoplasmic reticulum and is required for transport to the cell surface.

Its subcellular location is the cell membrane. Functionally, v region of the variable domain of T cell receptor (TR) alpha chain that participates in the antigen recognition. Alpha-beta T cell receptors are antigen specific receptors which are essential to the immune response and are present on the cell surface of T lymphocytes. Recognize peptide-major histocompatibility (MH) (pMH) complexes that are displayed by antigen presenting cells (APC), a prerequisite for efficient T cell adaptive immunity against pathogens. Binding of alpha-beta TR to pMH complex initiates TR-CD3 clustering on the cell surface and intracellular activation of LCK that phosphorylates the ITAM motifs of CD3G, CD3D, CD3E and CD247 enabling the recruitment of ZAP70. In turn ZAP70 phosphorylates LAT, which recruits numerous signaling molecules to form the LAT signalosome. The LAT signalosome propagates signal branching to three major signaling pathways, the calcium, the mitogen-activated protein kinase (MAPK) kinase and the nuclear factor NF-kappa-B (NF-kB) pathways, leading to the mobilization of transcription factors that are critical for gene expression and essential for T cell growth and differentiation. The T cell repertoire is generated in the thymus, by V-(D)-J rearrangement. This repertoire is then shaped by intrathymic selection events to generate a peripheral T cell pool of self-MH restricted, non-autoaggressive T cells. Post-thymic interaction of alpha-beta TR with the pMH complexes shapes TR structural and functional avidity. The protein is T cell receptor alpha variable 18 of Homo sapiens (Human).